The chain runs to 292 residues: tRNA dimethylallyltransferase (292 aa).

5–12 (APTGAGKT) contributes to the ATP binding site. Position 7–12 (7–12 (TGAGKT)) interacts with substrate. The segment at 29–32 (DSRQ) is interaction with substrate tRNA.

Belongs to the IPP transferase family. As to quaternary structure, monomer. It depends on Mg(2+) as a cofactor.

It carries out the reaction adenosine(37) in tRNA + dimethylallyl diphosphate = N(6)-dimethylallyladenosine(37) in tRNA + diphosphate. Catalyzes the transfer of a dimethylallyl group onto the adenine at position 37 in tRNAs that read codons beginning with uridine, leading to the formation of N6-(dimethylallyl)adenosine (i(6)A). The protein is tRNA dimethylallyltransferase of Leptospira borgpetersenii serovar Hardjo-bovis (strain JB197).